The sequence spans 105 residues: DNA-directed RNA polymerase subunit omega (105 aa).

The protein belongs to the RNA polymerase subunit omega family. The RNAP catalytic core consists of 2 alpha, 1 beta, 1 beta' and 1 omega subunit. When a sigma factor is associated with the core the holoenzyme is formed, which can initiate transcription.

The enzyme catalyses RNA(n) + a ribonucleoside 5'-triphosphate = RNA(n+1) + diphosphate. Promotes RNA polymerase assembly. Latches the N- and C-terminal regions of the beta' subunit thereby facilitating its interaction with the beta and alpha subunits. This Streptococcus uberis (strain ATCC BAA-854 / 0140J) protein is DNA-directed RNA polymerase subunit omega.